A 574-amino-acid chain; its full sequence is Developmental and secondary metabolism regulator veA (574 aa).

Disordered regions lie at residues 1–22 (MATRAPLAPPPNETEASVSRIT), 39–60 (ERARACGAGAKSSADRRPVDPP), 255–500 (RSSD…GAGK), and 513–548 (RSYEDSFGHDDRPLYNGMRPDTESHPRRLSDAGRNF). The Velvet domain maps to 25 to 230 (GKKLTYKLNV…AEQGCRVRIR (206 aa)). The Nuclear localization signal signature appears at 39 to 44 (ERARAC). 2 stretches are compositionally biased toward pro residues: residues 314 to 323 (RPMPPAPVPA) and 330 to 341 (PAPPAPPAPPSH). Composition is skewed to polar residues over residues 343 to 359 (PGYQSHLSFGSTQTQYP), 385 to 394 (HARNPSTSAE), 402 to 415 (YPSSRVSTERSSYP), and 448 to 458 (VAQSAGPRSQT). Residues 457-501 (QTPSSSLVPSLPPLKALSGDYPNNLSQPSSSISQSPSHDLGAGKK) are PEST. 2 stretches are compositionally biased toward low complexity: residues 459–474 (PSSSLVPSLPPLKALS) and 482–493 (SQPSSSISQSPS). Basic and acidic residues-rich tracts occupy residues 513 to 525 (RSYEDSFGHDDRP) and 532 to 543 (PDTESHPRRLSD).

This sequence belongs to the velvet family. VeA subfamily. Component of the heterotrimeric velvet complex composed of laeA, veA and velB; VeA acting as a bridging protein between laeA and velB.

It is found in the nucleus. It localises to the cytoplasm. In terms of biological role, component of the velvet transcription factor complex that controls sexual/asexual developmental ratio in response to light, promoting sexual development in the darkness while stimulating asexual sporulation under illumination. The velvet complex hat acts as a global regulator for secondary metabolite gene expression. Controls the expression of the aflatoxin gene cluster. Required for the expression of aflR and aflJ. Mediates the coordination of aflatoxigenic vesicles (aflatoxisomes) development with aflatoxin gene expression. Regulates branched chain amino acid and ethanol metabolism and acts as a positive regulator of mitochondrial and peroxisomal beta-oxidation. In Aspergillus parasiticus, this protein is Developmental and secondary metabolism regulator veA.